The chain runs to 962 residues: Protein suppressor of underreplication (962 aa).

5 disordered regions span residues 353–413, 438–590, 658–712, 866–900, and 916–962; these read EIVT…TRAA, TPTP…LSGS, NSSH…SPDL, QERT…TQAT, and QTSS…ELFK. Basic residues predominate over residues 372–382; it reads PRTKSKKKCSK. The segment covering 386 to 395 has biased composition (basic and acidic residues); that stretch reads PCKEADLTDS. 2 stretches are compositionally biased toward polar residues: residues 438 to 448 and 480 to 489; these read TPTPSGATTAI and LTRSAESKIN. Over residues 524–552 the composition is skewed to basic and acidic residues; sequence VKQESKAKAKPEQKKKIKTVDKPAQETPK. Over residues 553 to 562 the composition is skewed to basic residues; it reads RKPGRPRKCK. Residues 564 to 576 show a composition bias toward polar residues; it reads LTETLGKSKTKPN. Residues 673-683 are compositionally biased toward basic residues; sequence RRTKALKRKRK. 2 stretches are compositionally biased toward polar residues: residues 703–712 and 866–880; these read RSATNKSPDL and QERT…NSIV. Residues 885–894 are compositionally biased toward basic residues; sequence KSPKSPKHGA. A compositionally biased stretch (polar residues) spans 916 to 944; the sequence is QTSSVESVSAPSTPVNPSTSAAACQTRTA. Positions 953-962 are enriched in basic residues; sequence TKRKRLELFK.

It localises to the nucleus. The protein resides in the chromosome. Functionally, required for underreplication of DNA, which is found in many late replicating euchromatic regions of salivary gland polytene chromosomes. Controls chromatin organization in polytene chromosomes. This Drosophila erecta (Fruit fly) protein is Protein suppressor of underreplication (SuUR).